Reading from the N-terminus, the 161-residue chain is Phosphopantetheine adenylyltransferase (161 aa).

Residue S10 coordinates substrate. ATP is bound by residues 10 to 11 (SF) and H18. Substrate contacts are provided by K42, L74, and R88. ATP is bound by residues 88 to 89 (RG), E99, and 124 to 130 (YSFLSSS).

It belongs to the bacterial CoaD family. In terms of assembly, homohexamer. The cofactor is Mg(2+).

It is found in the cytoplasm. It carries out the reaction (R)-4'-phosphopantetheine + ATP + H(+) = 3'-dephospho-CoA + diphosphate. It functions in the pathway cofactor biosynthesis; coenzyme A biosynthesis; CoA from (R)-pantothenate: step 4/5. Reversibly transfers an adenylyl group from ATP to 4'-phosphopantetheine, yielding dephospho-CoA (dPCoA) and pyrophosphate. In Bacillus subtilis (strain 168), this protein is Phosphopantetheine adenylyltransferase.